We begin with the raw amino-acid sequence, 489 residues long: Mitochondrial distribution and morphology protein 12 (489 aa).

An SMP-LTD domain is found at 1 to 489 (MSIDLNWEAA…VFPSFWTFLV (489 aa)). Residues 72-82 (ESDSEDEDEGH) show a composition bias toward acidic residues. Disordered regions lie at residues 72–97 (ESDS…AAAD), 201–313 (WPDA…MRER), and 394–432 (DINH…QPRR). Residues 231-249 (LDTGSPSRPSTANTNPTQL) show a composition bias toward polar residues. 2 stretches are compositionally biased toward low complexity: residues 250 to 265 (SHGQ…NTSN) and 398 to 424 (QQRQ…NNPE).

Belongs to the MDM12 family. As to quaternary structure, component of the ER-mitochondria encounter structure (ERMES) or MDM complex, composed of MMM1, MDM10, mdm12 and MDM34. An MMM1 homodimer associates with one molecule of mdm12 on each side in a pairwise head-to-tail manner, and the SMP-LTD domains of MMM1 and mdm12 generate a continuous hydrophobic tunnel for phospholipid trafficking.

It is found in the mitochondrion outer membrane. The protein localises to the endoplasmic reticulum membrane. Component of the ERMES/MDM complex, which serves as a molecular tether to connect the endoplasmic reticulum (ER) and mitochondria. Components of this complex are involved in the control of mitochondrial shape and protein biogenesis, and function in nonvesicular lipid trafficking between the ER and mitochondria. mdm12 is required for the interaction of the ER-resident membrane protein MMM1 and the outer mitochondrial membrane-resident beta-barrel protein MDM10. The mdm12-MMM1 subcomplex functions in the major beta-barrel assembly pathway that is responsible for biogenesis of all mitochondrial outer membrane beta-barrel proteins, and acts in a late step after the SAM complex. The MDM10-mdm12-MMM1 subcomplex further acts in the TOM40-specific pathway after the action of the mdm12-MMM1 complex. Essential for establishing and maintaining the structure of mitochondria and maintenance of mtDNA nucleoids. The sequence is that of Mitochondrial distribution and morphology protein 12 from Talaromyces marneffei (strain ATCC 18224 / CBS 334.59 / QM 7333) (Penicillium marneffei).